The sequence spans 839 residues: Translation initiation factor IF-2 (839 aa).

Basic and acidic residues-rich tracts occupy residues 1-12 and 57-67; these read MSDNEIKNETPK and AEAKAQEKQAA. 2 disordered regions span residues 1–21 and 57–244; these read MSDN…RRTK and AEAK…GASL. Residues 68–90 are compositionally biased toward low complexity; it reads EKAAQAQTEAKAQTEQACTTKKT. 3 stretches are compositionally biased toward basic and acidic residues: residues 104–167, 185–199, and 212–233; these read PKTE…REET, READ…EGNR, and GGRE…DIKG. Positions 338 to 508 constitute a tr-type G domain; that stretch reads TRAPVVTIMG…ILQSEVLELT (171 aa). The G1 stretch occupies residues 347–354; sequence GHVDHGKT. 347 to 354 is a binding site for GTP; sequence GHVDHGKT. Residues 372-376 form a G2 region; that stretch reads GITQH. The tract at residues 394-397 is G3; it reads DTPG. GTP contacts are provided by residues 394–398 and 448–451; these read DTPGH and NKID. The tract at residues 448-451 is G4; sequence NKID. The segment at 484–486 is G5; the sequence is SAK.

This sequence belongs to the TRAFAC class translation factor GTPase superfamily. Classic translation factor GTPase family. IF-2 subfamily.

It localises to the cytoplasm. Functionally, one of the essential components for the initiation of protein synthesis. Protects formylmethionyl-tRNA from spontaneous hydrolysis and promotes its binding to the 30S ribosomal subunits. Also involved in the hydrolysis of GTP during the formation of the 70S ribosomal complex. The protein is Translation initiation factor IF-2 of Haemophilus ducreyi (strain 35000HP / ATCC 700724).